The sequence spans 122 residues: Small ribosomal subunit protein uS13 (122 aa).

Residues 93–122 are disordered; it reads RRGLPVRGQKTKTNARTRKGPKKTIANKKK.

It belongs to the universal ribosomal protein uS13 family. Part of the 30S ribosomal subunit. Forms a loose heterodimer with protein S19. Forms two bridges to the 50S subunit in the 70S ribosome.

Located at the top of the head of the 30S subunit, it contacts several helices of the 16S rRNA. In the 70S ribosome it contacts the 23S rRNA (bridge B1a) and protein L5 of the 50S subunit (bridge B1b), connecting the 2 subunits; these bridges are implicated in subunit movement. Contacts the tRNAs in the A and P-sites. The chain is Small ribosomal subunit protein uS13 from Clostridium beijerinckii (strain ATCC 51743 / NCIMB 8052) (Clostridium acetobutylicum).